Reading from the N-terminus, the 784-residue chain is Armadillo repeat-containing X-linked protein 2 (784 aa).

Residues 1 to 6 lie on the Mitochondrial intermembrane side of the membrane; sequence MSRARD. Mitochondrion outer membrane (MOM)-targeting sequence regions lie at residues 1-6 and 26-40; these read MSRARD and KYTRGKDQKKKRLTK. The chain crosses the membrane as a helical; Signal-anchor span at residues 7 to 27; it reads AGCVAAGIVIGASAWYCVYKY. Residues 28–784 are Cytoplasmic-facing; the sequence is TRGKDQKKKR…VKVIKLVNKF (757 aa). 3 disordered regions span residues 328-353, 388-461, and 488-522; these read TSGGAAVPSGGAATPRAAASTQRTAS, HSGA…ELGM, and PESEEGESGWTDTESDSDSEPDVPQRGKGKRTIPM. A compositionally biased stretch (low complexity) spans 396–418; it reads GTSGSSKTAATGKKAAPGAHTGA. The span at 488 to 508 shows a compositional bias: acidic residues; that stretch reads PESEEGESGWTDTESDSDSEP. 3 ARM repeats span residues 528–568, 570–609, and 650–689; these read PYEI…NNAN, SCNQETIRKLGGLPIIANMINKTDPHIKEKALMAMNNLSE, and ITNDYQHLLVNSIANFFRLLSQGGGKIKVEILKILSNFAE.

Belongs to the eutherian X-chromosome-specific Armcx family. Widely expressed in the adult nervous tissue, especially in the forebrain, including the cerebral cortex, hippocampus and thalamus.

It localises to the mitochondrion. The protein resides in the mitochondrion outer membrane. Functionally, may regulate the dynamics and distribution of mitochondria in neural cells. In Mus musculus (Mouse), this protein is Armadillo repeat-containing X-linked protein 2 (Armcx2).